The following is a 303-amino-acid chain: Probable 5-dehydro-4-deoxyglucarate dehydratase (303 aa).

Belongs to the DapA family.

It carries out the reaction 5-dehydro-4-deoxy-D-glucarate + H(+) = 2,5-dioxopentanoate + CO2 + H2O. Its pathway is carbohydrate acid metabolism; D-glucarate degradation; 2,5-dioxopentanoate from D-glucarate: step 2/2. The protein is Probable 5-dehydro-4-deoxyglucarate dehydratase of Pseudomonas fluorescens (strain Pf0-1).